A 1109-amino-acid chain; its full sequence is Receptor-like protein kinase (1109 aa).

An N-terminal signal peptide occupies residues 1 to 20; that stretch reads MKVAVNTFLLFLCSTSSIYA. Residues 21-764 lie on the Extracellular side of the membrane; that stretch reads AFALNSDGAA…GGLSTLGIAM (744 aa). N-linked (GlcNAc...) asparagine glycosylation is found at N50, N74, and N114. LRR repeat units follow at residues 69-92, 93-115, 117-140, 141-162, 165-187, and 189-209; these read FVDT…SHLK, HLKK…LGNC, LLEH…GALQ, NLRN…SLLS, HLET…IGNM, and ELTT…SSLG. 3 N-linked (GlcNAc...) asparagine glycosylation sites follow: N144, N177, and N186. An N-linked (GlcNAc...) asparagine glycan is attached at N210. 20 LRR repeats span residues 213–236, 237–258, 261–284, 309–331, 333–355, 357–378, 381–404, 405–427, 429–451, 453–476, 477–499, 500–523, 524–546, 548–569, 572–595, 596–618, 620–642, 643–666, 667–689, and 690–710; these read TLQE…NNLE, NLVY…DFVS, QIDT…GNCT, KLDT…LGKC, SMID…LGML, QLQY…SIWK, SLQS…TELK, QLVS…LGAN, SLEV…LCSQ, KLKR…GGCS, TLER…VEKQ, NLLF…GNLK, NVTA…LGSL, KLEH…ELSN, KLSE…GSLT, ELTK…LFQS, KLLN…GALQ, ALRS…GKLK, MLEE…STIQ, and SLTF…PSLT. N-linked (GlcNAc...) asparagine glycosylation is found at N245 and N282. Residues N367, N391, and N427 are each glycosylated (N-linked (GlcNAc...) asparagine). N-linked (GlcNAc...) asparagine glycosylation is found at N510, N524, N553, and N584. N648, N677, and N695 each carry an N-linked (GlcNAc...) asparagine glycan. The helical transmembrane segment at 765-785 threads the bilayer; sequence IVLGALLFIICLFLFSAFLFL. At 786–1109 the chain is on the cytoplasmic side; that stretch reads HCKKSVQEIA…YSSSVRNKSK (324 aa). One can recognise a Protein kinase domain in the interval 816–1096; sequence LNDKYVIGKG…DVVKQLTRWS (281 aa). Residues 822-830 and K845 contribute to the ATP site; that span reads IGKGAHGTI. The stretch at 827–850 is one LRR 27 repeat; sequence HGTIYKATLSPDKVYAVKKLVFTG. D942 (proton acceptor) is an active-site residue. Residues 958–981 form an LRR 28 repeat; that stretch reads ISDFGIAKLLDQSATSIPSNTVQG.

Belongs to the protein kinase superfamily. Ser/Thr protein kinase family. As to expression, INRPK1 and INRPK1b are expressed in leaves, cotyledons, shoot tips and roots from induced and vegetative plants. The highest concentrations of INRPK1 are found in vegetative roots, and the lowest concentrations in vegetative cotyledons. INRPK1b is more abundant in roots than other tissues. INRPK1a is expressed in vegetative roots. INRPK1c is expressed in cotyledons.

The protein resides in the cell membrane. It localises to the secreted. It catalyses the reaction L-seryl-[protein] + ATP = O-phospho-L-seryl-[protein] + ADP + H(+). It carries out the reaction L-threonyl-[protein] + ATP = O-phospho-L-threonyl-[protein] + ADP + H(+). In terms of biological role, possible role in short-day photoperiod floral induction. This chain is Receptor-like protein kinase (INRPK1), found in Ipomoea nil (Japanese morning glory).